Reading from the N-terminus, the 540-residue chain is Phosphomethylpyrimidine synthase (540 aa).

Substrate-binding positions include asparagine 143, methionine 172, tyrosine 201, histidine 237, 257 to 259 (SRG), 298 to 301 (DGLR), and glutamate 337. Histidine 341 contributes to the Zn(2+) binding site. Tyrosine 364 contacts substrate. Histidine 405 contributes to the Zn(2+) binding site. Cysteine 485, cysteine 488, and cysteine 493 together coordinate [4Fe-4S] cluster.

This sequence belongs to the ThiC family. Requires [4Fe-4S] cluster as cofactor.

The catalysed reaction is 5-amino-1-(5-phospho-beta-D-ribosyl)imidazole + S-adenosyl-L-methionine = 4-amino-2-methyl-5-(phosphooxymethyl)pyrimidine + CO + 5'-deoxyadenosine + formate + L-methionine + 3 H(+). It functions in the pathway cofactor biosynthesis; thiamine diphosphate biosynthesis. Its function is as follows. Catalyzes the synthesis of the hydroxymethylpyrimidine phosphate (HMP-P) moiety of thiamine from aminoimidazole ribotide (AIR) in a radical S-adenosyl-L-methionine (SAM)-dependent reaction. The protein is Phosphomethylpyrimidine synthase of Mycobacterium avium (strain 104).